The primary structure comprises 109 residues: Protease inhibitor SIL-V2 (109 aa).

2 disulfides stabilise this stretch: Cys30–Cys45 and Cys67–Cys97.

It belongs to the protease inhibitor I16 (SSI) family. As to quaternary structure, homodimer.

It is found in the secreted. This is Protease inhibitor SIL-V2 from Streptomyces orinoci (Streptoverticillium orinoci).